The chain runs to 419 residues: Hyaluronan synthase (419 aa).

5 helical membrane passes run 8–28 (LIVL…MYLF), 33–53 (VGIY…LSFL), 318–338 (IVAL…VAIG), 345–365 (AIQL…IVAL), and 376–396 (PASF…LQPL).

It belongs to the NodC/HAS family. It depends on Mg(2+) as a cofactor.

The protein localises to the cell membrane. The enzyme catalyses [hyaluronan](n) + UDP-N-acetyl-alpha-D-glucosamine = N-acetyl-beta-D-glucosaminyl-(1-&gt;4)-[hyaluronan](n) + UDP + H(+). It carries out the reaction N-acetyl-beta-D-glucosaminyl-(1-&gt;4)-[hyaluronan](n) + UDP-alpha-D-glucuronate = [hyaluronan](n+1) + UDP + H(+). The protein operates within glycan biosynthesis; hyaluronan biosynthesis. In terms of biological role, glycosaminoglycan synthesis. The hyaluronic acid capsule is involved in the pathogenicity of group A Streptococci; it may be the major virulence determinant. This Streptococcus pyogenes serotype M18 (strain MGAS8232) protein is Hyaluronan synthase (hasA).